The chain runs to 453 residues: Acid phosphatase (453 aa).

Residues methionine 1–alanine 18 form the signal peptide. Catalysis depends on histidine 69, which acts as the Nucleophile. N-linked (GlcNAc...) asparagine glycosylation is found at asparagine 95, asparagine 151, asparagine 183, asparagine 193, asparagine 243, and asparagine 319. Aspartate 331 serves as the catalytic Proton donor. Asparagine 410, asparagine 429, and asparagine 443 each carry an N-linked (GlcNAc...) asparagine glycan.

It belongs to the histidine acid phosphatase family.

It is found in the secreted. The protein resides in the cell wall. The catalysed reaction is a phosphate monoester + H2O = an alcohol + phosphate. This Schizosaccharomyces pombe (strain 972 / ATCC 24843) (Fission yeast) protein is Acid phosphatase (pho1).